Reading from the N-terminus, the 254-residue chain is Alcohol dehydrogenase 2 (254 aa).

Residue Phe-10 to Leu-33 coordinates NAD(+). Ser-138 is a binding site for substrate. Tyr-151 acts as the Proton acceptor in catalysis.

The protein belongs to the short-chain dehydrogenases/reductases (SDR) family. Homodimer.

It carries out the reaction a primary alcohol + NAD(+) = an aldehyde + NADH + H(+). It catalyses the reaction a secondary alcohol + NAD(+) = a ketone + NADH + H(+). In Drosophila mojavensis (Fruit fly), this protein is Alcohol dehydrogenase 2 (Adh2).